The chain runs to 313 residues: Ribosomal RNA small subunit methyltransferase H (313 aa).

Residues 35–37, Asp-55, Phe-79, Asp-101, and Gln-108 each bind S-adenosyl-L-methionine; that span reads GGH.

The protein belongs to the methyltransferase superfamily. RsmH family.

The protein localises to the cytoplasm. The catalysed reaction is cytidine(1402) in 16S rRNA + S-adenosyl-L-methionine = N(4)-methylcytidine(1402) in 16S rRNA + S-adenosyl-L-homocysteine + H(+). Specifically methylates the N4 position of cytidine in position 1402 (C1402) of 16S rRNA. The polypeptide is Ribosomal RNA small subunit methyltransferase H (Shigella sonnei (strain Ss046)).